We begin with the raw amino-acid sequence, 209 residues long: MKLRGLYAITDSQLLDDGRLLPYVEAALRGGARLLQYRDKSCDQARRLREAASLRELCERHGAQLIVNDDAELAARLGVGVHLGQTDGSLSAARALLGRQALVGATCHASLELAEQAVADGASYVAFGRFFNSSTKPGAPAASVELLDQARPRLHLPITAIGGISLDTAPGLIARGVDLIAVIHALFAAASAAEVERRARAFSALFETA.

4-amino-2-methyl-5-(diphosphooxymethyl)pyrimidine contacts are provided by residues 36-40 and asparagine 68; that span reads QYRDK. Mg(2+)-binding residues include aspartate 69 and aspartate 87. Threonine 106 is a 4-amino-2-methyl-5-(diphosphooxymethyl)pyrimidine binding site. 2-[(2R,5Z)-2-carboxy-4-methylthiazol-5(2H)-ylidene]ethyl phosphate is bound at residue 133–135; that stretch reads SST. Lysine 136 contacts 4-amino-2-methyl-5-(diphosphooxymethyl)pyrimidine. Glycine 163 serves as a coordination point for 2-[(2R,5Z)-2-carboxy-4-methylthiazol-5(2H)-ylidene]ethyl phosphate.

This sequence belongs to the thiamine-phosphate synthase family. Requires Mg(2+) as cofactor.

It catalyses the reaction 2-[(2R,5Z)-2-carboxy-4-methylthiazol-5(2H)-ylidene]ethyl phosphate + 4-amino-2-methyl-5-(diphosphooxymethyl)pyrimidine + 2 H(+) = thiamine phosphate + CO2 + diphosphate. The catalysed reaction is 2-(2-carboxy-4-methylthiazol-5-yl)ethyl phosphate + 4-amino-2-methyl-5-(diphosphooxymethyl)pyrimidine + 2 H(+) = thiamine phosphate + CO2 + diphosphate. The enzyme catalyses 4-methyl-5-(2-phosphooxyethyl)-thiazole + 4-amino-2-methyl-5-(diphosphooxymethyl)pyrimidine + H(+) = thiamine phosphate + diphosphate. Its pathway is cofactor biosynthesis; thiamine diphosphate biosynthesis; thiamine phosphate from 4-amino-2-methyl-5-diphosphomethylpyrimidine and 4-methyl-5-(2-phosphoethyl)-thiazole: step 1/1. Condenses 4-methyl-5-(beta-hydroxyethyl)thiazole monophosphate (THZ-P) and 2-methyl-4-amino-5-hydroxymethyl pyrimidine pyrophosphate (HMP-PP) to form thiamine monophosphate (TMP). The protein is Thiamine-phosphate synthase of Pseudomonas paraeruginosa (strain DSM 24068 / PA7) (Pseudomonas aeruginosa (strain PA7)).